Here is an 874-residue protein sequence, read N- to C-terminus: Probable inorganic carbon transporter subunit DabA (874 aa).

Zn(2+) contacts are provided by C398, D400, H580, and C595.

It belongs to the inorganic carbon transporter (TC 9.A.2) DabA family. Forms a complex with DabB. Requires Zn(2+) as cofactor.

Its subcellular location is the cell membrane. Its function is as follows. Part of an energy-coupled inorganic carbon pump. This is Probable inorganic carbon transporter subunit DabA from Bacillus cereus (strain ATCC 10987 / NRS 248).